The sequence spans 164 residues: 3-isopropylmalate dehydratase small subunit (164 aa).

This sequence belongs to the LeuD family. LeuD type 2 subfamily. Heterodimer of LeuC and LeuD.

It catalyses the reaction (2R,3S)-3-isopropylmalate = (2S)-2-isopropylmalate. It participates in amino-acid biosynthesis; L-leucine biosynthesis; L-leucine from 3-methyl-2-oxobutanoate: step 2/4. Its function is as follows. Catalyzes the isomerization between 2-isopropylmalate and 3-isopropylmalate, via the formation of 2-isopropylmaleate. The polypeptide is 3-isopropylmalate dehydratase small subunit (Syntrophus aciditrophicus (strain SB)).